A 943-amino-acid chain; its full sequence is Translation initiation factor IF-2 (943 aa).

The segment covering 99-113 (VKAAQTQAAPVQPEQ) has biased composition (low complexity). The interval 99 to 354 (VKAAQTQAAP…LEPNQHAFQA (256 aa)) is disordered. Positions 117–141 (DAVKARAEAAARAEARAKAEAEAAK) are enriched in basic and acidic residues. A compositionally biased stretch (low complexity) spans 145–172 (AKAGNKAKPAAQKPTEAKAETAPVAAET). A compositionally biased stretch (basic and acidic residues) spans 173 to 197 (KPAEPKEKAVKPKHERNGKGKDAKK). Low complexity predominate over residues 200 to 215 (KPAAPAVPQPVVSAEE). The segment covering 216-250 (QAQRDEEARRAAALRAHQEALLKEKQERQARREAM) has biased composition (basic and acidic residues). Residues 251–264 (KQQAEQQAKAAQEA) are compositionally biased toward low complexity. Basic and acidic residues-rich tracts occupy residues 295 to 308 (AKKE…DEGQ) and 319 to 335 (GGRD…ERVR). Residues 443–612 (PRPPVVTVMG…LLEAEVLELT (170 aa)) form the tr-type G domain. The G1 stretch occupies residues 452–459 (GHVDHGKT). Residue 452-459 (GHVDHGKT) participates in GTP binding. The interval 477–481 (GITQH) is G2. Residues 498–501 (DTPG) are G3. GTP-binding positions include 498–502 (DTPGH) and 552–555 (NKID). The interval 552 to 555 (NKID) is G4. The segment at 588–590 (SAK) is G5.

Belongs to the TRAFAC class translation factor GTPase superfamily. Classic translation factor GTPase family. IF-2 subfamily.

It is found in the cytoplasm. Functionally, one of the essential components for the initiation of protein synthesis. Protects formylmethionyl-tRNA from spontaneous hydrolysis and promotes its binding to the 30S ribosomal subunits. Also involved in the hydrolysis of GTP during the formation of the 70S ribosomal complex. This chain is Translation initiation factor IF-2, found in Neisseria gonorrhoeae (strain NCCP11945).